The chain runs to 365 residues: MTCSSFGKCGSCVLWEMPYDEQLKMKSEKLKEMFSEFDMPEIEVVHGSDEHFRARAEFRVWHEGDKSYYAMRKRKEDGRGVIPIEECKIVDKAIYDIMTPLLKEIEKNDNLRFKLYEIDFLSNSKGELIITLIYHKKVDESIAEDIKKLKEKFKNADFIVRKKGRKYVFDKNYLIEELNINSKTYKYKIIENTFSQPNRQMNQKMIEWAMRNSEDLKGDLVELYCGNGNFTIPLSERFNKVIATEISKESIEAATYNAEINARDNITFLAMSAAEFSKLYKDRSPLITKYDLKNILIDPPRAGLDDKSREFVNEFDNIIYISCNPETLQRDLKTLAKGREIKAFAFFDQFPYTNHAECGVILKKN.

Positions 196, 224, 229, 245, and 298 each coordinate S-adenosyl-L-methionine. The Nucleophile role is filled by cysteine 323. Residue glutamate 357 is the Proton acceptor of the active site.

This sequence belongs to the class I-like SAM-binding methyltransferase superfamily. RNA M5U methyltransferase family. TrmA subfamily.

It carries out the reaction uridine(54) in tRNA + S-adenosyl-L-methionine = 5-methyluridine(54) in tRNA + S-adenosyl-L-homocysteine + H(+). It catalyses the reaction uridine(341) in tmRNA + S-adenosyl-L-methionine = 5-methyluridine(341) in tmRNA + S-adenosyl-L-homocysteine + H(+). Functionally, dual-specificity methyltransferase that catalyzes the formation of 5-methyluridine at position 54 (m5U54) in all tRNAs, and that of position 341 (m5U341) in tmRNA (transfer-mRNA). The protein is tRNA/tmRNA (uracil-C(5))-methyltransferase of Nautilia profundicola (strain ATCC BAA-1463 / DSM 18972 / AmH).